The chain runs to 142 residues: Membrane protein YneK (142 aa).

The chain crosses the membrane as a helical span at residues 6–26 (FLWFILFWVIMMVVLLSIGGF).

As to quaternary structure, interacts with the N-terminal D1 domain of dynamin-like protein DynA.

Its subcellular location is the cell membrane. The chain is Membrane protein YneK (yneK) from Bacillus subtilis (strain 168).